A 172-amino-acid polypeptide reads, in one-letter code: 3-hydroxydecanoyl-[acyl-carrier-protein] dehydratase (172 aa).

Residue His-71 is part of the active site.

It belongs to the thioester dehydratase family. FabA subfamily. As to quaternary structure, homodimer.

Its subcellular location is the cytoplasm. The catalysed reaction is a (3R)-hydroxyacyl-[ACP] = a (2E)-enoyl-[ACP] + H2O. It catalyses the reaction (3R)-hydroxydecanoyl-[ACP] = (2E)-decenoyl-[ACP] + H2O. It carries out the reaction (2E)-decenoyl-[ACP] = (3Z)-decenoyl-[ACP]. The protein operates within lipid metabolism; fatty acid biosynthesis. Its function is as follows. Necessary for the introduction of cis unsaturation into fatty acids. Catalyzes the dehydration of (3R)-3-hydroxydecanoyl-ACP to E-(2)-decenoyl-ACP and then its isomerization to Z-(3)-decenoyl-ACP. Can catalyze the dehydratase reaction for beta-hydroxyacyl-ACPs with saturated chain lengths up to 16:0, being most active on intermediate chain length. This is 3-hydroxydecanoyl-[acyl-carrier-protein] dehydratase from Sodalis glossinidius (strain morsitans).